We begin with the raw amino-acid sequence, 491 residues long: MANYFNTLNLRQQLAQLGKCRFMGRDEFADGASYLQGKKVVIVGCGAQGLNQGLNMRDSGLDISYALRKEAITEKRASWRKATENGFKVGTYEELIPQADLVVNLTPDKQHSDVVRTVQPLMKDGAALGYSHGFNIVEVGEQIRKDITVVMVAPKCPGTEVREEYKRGFGVPTLIAVHPENDPKGEGMAIAKAWAAATGGHRAGVLESSFVAEVKSDLMGEQTILCGMLQAGSLLCFDKLVEEGTDPAYAEKLIQFGWETITEALKQGGITLMMDRLSNPAKLRAYALSEQLKEIMAPLFQKHMDDIISGEFSSGMMADWANDDKKLLTWREETGKTAFETAPQYEGKIGEQEYFDKGVLMIAMVKAGVELAFETMVDSGIIEESAYYESLHELPLIANTIARKRLYEMNVVISDTAEYGNYLFSYACVPLLKPFMAELQPGDLGKAIPEGAVDNAQLRDVNEAIRSHAIEQVGKKLRGYMTDMKRIAVAG.

The 194-residue stretch at 15-208 folds into the KARI N-terminal Rossmann domain; that stretch reads AQLGKCRFMG…GGHRAGVLES (194 aa). NADP(+) contacts are provided by residues 45–48, arginine 68, arginine 76, serine 78, and 108–110; these read CGAQ and DKQ. Residue histidine 132 is part of the active site. An NADP(+)-binding site is contributed by glycine 158. KARI C-terminal knotted domains follow at residues 209-344 and 345-484; these read SFVA…TAPQ and YEGK…MTDM. Mg(2+)-binding residues include aspartate 217, glutamate 221, glutamate 389, and glutamate 393. Serine 414 provides a ligand contact to substrate.

Belongs to the ketol-acid reductoisomerase family. Mg(2+) is required as a cofactor.

It catalyses the reaction (2R)-2,3-dihydroxy-3-methylbutanoate + NADP(+) = (2S)-2-acetolactate + NADPH + H(+). It carries out the reaction (2R,3R)-2,3-dihydroxy-3-methylpentanoate + NADP(+) = (S)-2-ethyl-2-hydroxy-3-oxobutanoate + NADPH + H(+). The protein operates within amino-acid biosynthesis; L-isoleucine biosynthesis; L-isoleucine from 2-oxobutanoate: step 2/4. It participates in amino-acid biosynthesis; L-valine biosynthesis; L-valine from pyruvate: step 2/4. Functionally, involved in the biosynthesis of branched-chain amino acids (BCAA). Catalyzes an alkyl-migration followed by a ketol-acid reduction of (S)-2-acetolactate (S2AL) to yield (R)-2,3-dihydroxy-isovalerate. In the isomerase reaction, S2AL is rearranged via a Mg-dependent methyl migration to produce 3-hydroxy-3-methyl-2-ketobutyrate (HMKB). In the reductase reaction, this 2-ketoacid undergoes a metal-dependent reduction by NADPH to yield (R)-2,3-dihydroxy-isovalerate. The sequence is that of Ketol-acid reductoisomerase (NADP(+)) from Escherichia fergusonii (strain ATCC 35469 / DSM 13698 / CCUG 18766 / IAM 14443 / JCM 21226 / LMG 7866 / NBRC 102419 / NCTC 12128 / CDC 0568-73).